Reading from the N-terminus, the 213-residue chain is Ras-related protein Rab-39B (213 aa).

The GTP site is built by S17, G20, K21, S22, C23, S37, and T40. S22 contributes to the Mg(2+) binding site. The tract at residues 35 to 43 (QVSDPTVGV) is switch-I. Residues T40 and D64 each contribute to the Mg(2+) site. Positions 67, 123, 124, 126, 154, and 155 each coordinate GTP. A switch-II region spans residues 67-83 (GQERFRSITRAYYRNSV). At S201 the chain carries Phosphoserine. S-geranylgeranyl cysteine attachment occurs at residues C211 and C213. Residue C213 is modified to Cysteine methyl ester.

The protein belongs to the small GTPase superfamily. Rab family. As to quaternary structure, interacts (GDP-bound) with C9orf72; C9orf72 in complex with SMCR8 acts as a GEF for RAB39B. Interacts (in GTP-bound form) with PICK1 (via PDZ domain); a PICK1 homodimer may allow simultaneous association of RAB39B and GRIA2 to PICK1 which is involved in GRIA2 trafficking. Interacts with isoform c of RASSF1; the interaction is strong. Interacts with isoform a of RASSF1; the interaction is weak. Interacts with the DLG4/PSD-95. Interacts (GTP-bound) with HOPS complex components VPS39 and VPS41. Mg(2+) is required as a cofactor. Specifically expressed in neuron and neuronal precursors in the brain. Expression is high in all regions of the brain with highest levels observed in the hippocampus.

Its subcellular location is the cell membrane. It is found in the cytoplasmic vesicle membrane. The protein resides in the golgi apparatus. The protein localises to the cytoplasmic vesicle. It localises to the autophagosome membrane. Its subcellular location is the autolysosome membrane. It catalyses the reaction GTP + H2O = GDP + phosphate + H(+). With respect to regulation, regulated by guanine nucleotide exchange factors (GEFs) including C9orf72-SMCR8 complex, which promote the exchange of bound GDP for free GTP. Regulated by GTPase activating proteins (GAPs) which increase the GTP hydrolysis activity. Inhibited by GDP dissociation inhibitors (GDIs). Its function is as follows. The small GTPases Rab are key regulators of intracellular membrane trafficking, from the formation of transport vesicles to their fusion with membranes. Rabs cycle between an inactive GDP-bound form and an active GTP-bound form that is able to recruit to membranes different sets of downstream effectors directly responsible for vesicle formation, movement, tethering and fusion. RAB39B is involved in autophagy and may function in autophagosome formation. Binds downstream effector PICK1 to ensure selectively GRIA2 exit from the endoplasmic reticulum to the Golgi and to regulate AMPAR composition at the post-synapses and thus synaptic transmission. May regulate the homeostasis of SNCA/alpha-synuclein. The polypeptide is Ras-related protein Rab-39B (Mus musculus (Mouse)).